We begin with the raw amino-acid sequence, 434 residues long: Meiosis-specific kinetochore protein (434 aa).

2 disordered regions span residues 1-102 (MDKI…PCET) and 249-289 (VFAE…PDNK). Over residues 46-62 (KGKEQGLRKITEKKELS) the composition is skewed to basic and acidic residues. Residues 64 to 76 (LTGSSSQRPSLLS) are compositionally biased toward polar residues. Positions 334–336 (STP) match the POLO box domain (PBD)-binding motif. The required for localization to kinetochores stretch occupies residues 391-394 (EICC). Residues 404–424 (QMRRKDPAVKNRCSPPKDVPL) form a disordered region.

Interacts with CENPC. Interacts with PLK1; required for recruitment of PLK1 at kinetochores. Germ cell-specific. Expressed in both testis and ovary. Not expressed in other tissues.

Its subcellular location is the chromosome. The protein localises to the centromere. It localises to the kinetochore. In terms of biological role, key regulator of kinetochore function during meiosis I: required both for mono-orientation of kinetochores on sister chromosomes and protection of centromeric cohesin from separase-mediated cleavage. Acts by facilitating kinetochore mono-orientation during meiosis I, when kinetochores on sister chromosomes face the same direction and are thus captured and pulled by spindle fibers from the same pole. Also required to prevent cleavage of cohesin at centromeres during meiosis I, possibly by acting as a regulator of the shugoshin-dependent protection pathway. Acts in collaboration with PLK1: required for PLK1 enrichment to kinetochores. Not required during meiosis II or mitosis. The protein is Meiosis-specific kinetochore protein of Mus musculus (Mouse).